A 623-amino-acid polypeptide reads, in one-letter code: Isocitrate dehydrogenase kinase/phosphatase (623 aa).

ATP contacts are provided by residues 344-350 (APGIKGM) and Lys-365. Residue Asp-400 is part of the active site.

The protein belongs to the AceK family.

It is found in the cytoplasm. It catalyses the reaction L-seryl-[isocitrate dehydrogenase] + ATP = O-phospho-L-seryl-[isocitrate dehydrogenase] + ADP + H(+). Bifunctional enzyme which can phosphorylate or dephosphorylate isocitrate dehydrogenase (IDH) on a specific serine residue. This is a regulatory mechanism which enables bacteria to bypass the Krebs cycle via the glyoxylate shunt in response to the source of carbon. When bacteria are grown on glucose, IDH is fully active and unphosphorylated, but when grown on acetate or ethanol, the activity of IDH declines drastically concomitant with its phosphorylation. This chain is Isocitrate dehydrogenase kinase/phosphatase, found in Polaromonas naphthalenivorans (strain CJ2).